Reading from the N-terminus, the 693-residue chain is tRNA (guanine(37)-N(1))-methyltransferase (693 aa).

Residues R327, 365–366 (DI), and 392–393 (DA) each bind S-adenosyl-L-methionine. Residues 497–572 (AGDSHQSNSH…QKAEDAPTNE (76 aa)) are disordered. The span at 500 to 512 (SHQSNSHQSNPHE) shows a compositional bias: low complexity. N591 contributes to the S-adenosyl-L-methionine binding site.

Belongs to the class I-like SAM-binding methyltransferase superfamily. TRM5/TYW2 family. As to quaternary structure, monomer.

It localises to the mitochondrion matrix. It is found in the nucleus. The protein localises to the cytoplasm. It catalyses the reaction guanosine(37) in tRNA + S-adenosyl-L-methionine = N(1)-methylguanosine(37) in tRNA + S-adenosyl-L-homocysteine + H(+). Its function is as follows. Specifically methylates the N1 position of guanosine-37 in various cytoplasmic and mitochondrial tRNAs. Methylation is not dependent on the nature of the nucleoside 5' of the target nucleoside. This is the first step in the biosynthesis of wybutosine (yW), a modified base adjacent to the anticodon of tRNAs and required for accurate decoding. This Plasmodium vivax (strain Salvador I) protein is tRNA (guanine(37)-N(1))-methyltransferase.